We begin with the raw amino-acid sequence, 572 residues long: Phosphoenolpyruvate-protein phosphotransferase (572 aa).

H190 (tele-phosphohistidine intermediate) is an active-site residue. The phosphoenolpyruvate site is built by R297 and R333. Mg(2+)-binding residues include E432 and D456. Phosphoenolpyruvate contacts are provided by residues 455 to 456 (ND) and R466. C503 serves as the catalytic Proton donor.

This sequence belongs to the PEP-utilizing enzyme family. Homodimer. The cofactor is Mg(2+).

Its subcellular location is the cytoplasm. It carries out the reaction L-histidyl-[protein] + phosphoenolpyruvate = N(pros)-phospho-L-histidyl-[protein] + pyruvate. Functionally, general (non sugar-specific) component of the phosphoenolpyruvate-dependent sugar phosphotransferase system (sugar PTS). This major carbohydrate active-transport system catalyzes the phosphorylation of incoming sugar substrates concomitantly with their translocation across the cell membrane. Enzyme I transfers the phosphoryl group from phosphoenolpyruvate (PEP) to the phosphoryl carrier protein (HPr). The polypeptide is Phosphoenolpyruvate-protein phosphotransferase (ptsI) (Listeria innocua serovar 6a (strain ATCC BAA-680 / CLIP 11262)).